The chain runs to 185 residues: ATP-dependent protease subunit HslV (185 aa).

Residue threonine 6 is part of the active site. Na(+) is bound by residues glycine 162, cysteine 165, and threonine 168.

The protein belongs to the peptidase T1B family. HslV subfamily. A double ring-shaped homohexamer of HslV is capped on each side by a ring-shaped HslU homohexamer. The assembly of the HslU/HslV complex is dependent on binding of ATP.

The protein localises to the cytoplasm. The enzyme catalyses ATP-dependent cleavage of peptide bonds with broad specificity.. Its activity is regulated as follows. Allosterically activated by HslU binding. Functionally, protease subunit of a proteasome-like degradation complex believed to be a general protein degrading machinery. The chain is ATP-dependent protease subunit HslV from Nitratidesulfovibrio vulgaris (strain DSM 19637 / Miyazaki F) (Desulfovibrio vulgaris).